A 330-amino-acid chain; its full sequence is Putative 1-aminocyclopropane-1-carboxylate deaminase (330 aa).

Residue Lys54 is modified to N6-(pyridoxal phosphate)lysine.

This sequence belongs to the ACC deaminase/D-cysteine desulfhydrase family. The cofactor is pyridoxal 5'-phosphate.

It catalyses the reaction 1-aminocyclopropane-1-carboxylate + H2O = 2-oxobutanoate + NH4(+). In Pyrococcus abyssi (strain GE5 / Orsay), this protein is Putative 1-aminocyclopropane-1-carboxylate deaminase.